The following is a 513-amino-acid chain: Probable WRKY transcription factor 3 (513 aa).

Residues 1 to 11 are compositionally biased toward basic and acidic residues; the sequence is MAEKEEKEPSK. Disordered stretches follow at residues 1 to 26, 175 to 281, and 297 to 394; these read MAEK…ISLP, NVHM…PACP, and IIYK…VASS. Residues 179–201 show a composition bias toward low complexity; that stretch reads QQSQQSEYPSSTQQQQQQQQQAS. Positions 202–228 are enriched in polar residues; the sequence is LTEIPSFSSAPRSQIRASVQETSQGQR. Residues 229 to 240 are compositionally biased toward basic and acidic residues; the sequence is ETSEISVFEHRS. Residues 244–308 constitute a DNA-binding region (WRKY 1); it reads NADKPADDGY…YKGQHNHELP (65 aa). Polar residues-rich tracts occupy residues 311–335 and 343–355; these read RGNN…SSLN and TSQV…MSEA. The span at 368-387 shows a compositional bias: basic and acidic residues; the sequence is VGERHEDEPDPKRRNTEVRV. Positions 409-474 form a DNA-binding region, WRKY 2; sequence SEVDLLDDGY…YEGKHNHDVP (66 aa).

As to expression, in young, mature and senescent leaves.

It localises to the nucleus. Transcription factor. Interacts specifically with the W box (5'-(T)TGAC[CT]-3'), a frequently occurring elicitor-responsive cis-acting element. The sequence is that of Probable WRKY transcription factor 3 (WRKY3) from Arabidopsis thaliana (Mouse-ear cress).